The chain runs to 374 residues: Histidinol-phosphate aminotransferase 1 (374 aa).

Position 232 is an N6-(pyridoxal phosphate)lysine (lysine 232).

The protein belongs to the class-II pyridoxal-phosphate-dependent aminotransferase family. Histidinol-phosphate aminotransferase subfamily. Homodimer. Requires pyridoxal 5'-phosphate as cofactor.

The catalysed reaction is L-histidinol phosphate + 2-oxoglutarate = 3-(imidazol-4-yl)-2-oxopropyl phosphate + L-glutamate. It participates in amino-acid biosynthesis; L-histidine biosynthesis; L-histidine from 5-phospho-alpha-D-ribose 1-diphosphate: step 7/9. This chain is Histidinol-phosphate aminotransferase 1 (hisC1), found in Ralstonia nicotianae (strain ATCC BAA-1114 / GMI1000) (Ralstonia solanacearum).